Consider the following 75-residue polypeptide: Large ribosomal subunit protein eL14 (75 aa).

Belongs to the eukaryotic ribosomal protein eL14 family.

In Methanothermobacter thermautotrophicus (strain ATCC 29096 / DSM 1053 / JCM 10044 / NBRC 100330 / Delta H) (Methanobacterium thermoautotrophicum), this protein is Large ribosomal subunit protein eL14.